The chain runs to 171 residues: Co-chaperone protein HscB (171 aa).

Residues 2–74 (DYFTLFGLPA…LMRAEYLLSL (73 aa)) enclose the J domain.

Belongs to the HscB family. Interacts with HscA and stimulates its ATPase activity. Interacts with IscU.

Functionally, co-chaperone involved in the maturation of iron-sulfur cluster-containing proteins. Seems to help targeting proteins to be folded toward HscA. This Shigella flexneri serotype 5b (strain 8401) protein is Co-chaperone protein HscB.